A 132-amino-acid polypeptide reads, in one-letter code: Agouti-signaling protein (132 aa).

The signal sequence occupies residues 1 to 22 (MDVTRLLLATLLVFLCFFTAYS). Asparagine 39 is a glycosylation site (N-linked (GlcNAc...) asparagine). A disordered region spans residues 61 to 87 (QISRKEAEKKRSSKKEASMKKVARPRT). Positions 63–79 (SRKEAEKKRSSKKEASM) are enriched in basic and acidic residues. Intrachain disulfides connect cysteine 93–cysteine 108, cysteine 100–cysteine 114, cysteine 107–cysteine 125, cysteine 111–cysteine 132, and cysteine 116–cysteine 123. Residues 93–132 (CVATRDSCKSPAPACCDPCASCQCRFFRSACSCRVLSLNC) enclose the Agouti domain.

Its subcellular location is the secreted. Functionally, involved in the regulation of melanogenesis. The binding of ASP to MC1R precludes alpha-MSH initiated signaling and thus blocks production of cAMP, leading to a down-regulation of eumelanogenesis (brown/black pigment) and thus increasing synthesis of pheomelanin (yellow/red pigment). The protein is Agouti-signaling protein (ASIP) of Macaca nigra (Celebes black macaque).